Consider the following 421-residue polypeptide: Medium-chain specific acyl-CoA dehydrogenase, mitochondrial (421 aa).

Residues 1-25 (MAAAFGRCCRVLRSISRFHWRSQHT) constitute a mitochondrion transit peptide. Lysine 69 carries the N6-acetyllysine; alternate modification. Lysine 69 carries the N6-succinyllysine; alternate modification. Residue 158 to 167 (YCVTEPGAGS) participates in FAD binding. Serine 167 provides a ligand contact to octanoyl-CoA. Residue lysine 179 is modified to N6-succinyllysine. 191–193 (WIT) provides a ligand contact to FAD. 4 positions are modified to N6-acetyllysine; alternate: lysine 212, lysine 217, lysine 259, and lysine 271. Lysine 212, lysine 217, lysine 259, and lysine 271 each carry N6-succinyllysine; alternate. Aspartate 278 lines the octanoyl-CoA pocket. Lysine 279 is subject to N6-acetyllysine. Arginine 281 lines the octanoyl-CoA pocket. Lysine 301 is modified (N6-acetyllysine). Residues 306-308 (RKT) and 316-317 (HQ) each bind FAD. Residues arginine 349 and threonine 351 each coordinate octanoyl-CoA. A Phosphothreonine modification is found at threonine 351. 374–378 (QIFGG) is an FAD binding site. Glutamate 401 is a binding site for octanoyl-CoA. The Proton acceptor role is filled by glutamate 401. 402–405 (GTSQ) serves as a coordination point for FAD.

This sequence belongs to the acyl-CoA dehydrogenase family. Homotetramer. Interacts with the heterodimeric electron transfer flavoprotein ETF. Requires FAD as cofactor. Post-translationally, acetylated. Could occur at proximity of the cofactor-binding sites and reduce the catalytic activity. Could be deacetylated by SIRT3.

The protein resides in the mitochondrion matrix. It carries out the reaction a medium-chain 2,3-saturated fatty acyl-CoA + oxidized [electron-transfer flavoprotein] + H(+) = a medium-chain (2E)-enoyl-CoA + reduced [electron-transfer flavoprotein]. It catalyses the reaction pentanoyl-CoA + oxidized [electron-transfer flavoprotein] + H(+) = (2E)-pentenoyl-CoA + reduced [electron-transfer flavoprotein]. The catalysed reaction is hexanoyl-CoA + oxidized [electron-transfer flavoprotein] + H(+) = (2E)-hexenoyl-CoA + reduced [electron-transfer flavoprotein]. The enzyme catalyses octanoyl-CoA + oxidized [electron-transfer flavoprotein] + H(+) = (2E)-octenoyl-CoA + reduced [electron-transfer flavoprotein]. It carries out the reaction decanoyl-CoA + oxidized [electron-transfer flavoprotein] + H(+) = (2E)-decenoyl-CoA + reduced [electron-transfer flavoprotein]. It catalyses the reaction dodecanoyl-CoA + oxidized [electron-transfer flavoprotein] + H(+) = (2E)-dodecenoyl-CoA + reduced [electron-transfer flavoprotein]. The catalysed reaction is tetradecanoyl-CoA + oxidized [electron-transfer flavoprotein] + H(+) = (2E)-tetradecenoyl-CoA + reduced [electron-transfer flavoprotein]. The enzyme catalyses oxidized [electron-transfer flavoprotein] + hexadecanoyl-CoA + H(+) = (2E)-hexadecenoyl-CoA + reduced [electron-transfer flavoprotein]. Its pathway is lipid metabolism; mitochondrial fatty acid beta-oxidation. Medium-chain specific acyl-CoA dehydrogenase is one of the acyl-CoA dehydrogenases that catalyze the first step of mitochondrial fatty acid beta-oxidation, an aerobic process breaking down fatty acids into acetyl-CoA and allowing the production of energy from fats. The first step of fatty acid beta-oxidation consists in the removal of one hydrogen from C-2 and C-3 of the straight-chain fatty acyl-CoA thioester, resulting in the formation of trans-2-enoyl-CoA. Electron transfer flavoprotein (ETF) is the electron acceptor that transfers electrons to the main mitochondrial respiratory chain via ETF-ubiquinone oxidoreductase (ETF dehydrogenase). Among the different mitochondrial acyl-CoA dehydrogenases, medium-chain specific acyl-CoA dehydrogenase acts specifically on acyl-CoAs with saturated 6 to 12 carbons long primary chains. The polypeptide is Medium-chain specific acyl-CoA dehydrogenase, mitochondrial (Macaca fascicularis (Crab-eating macaque)).